The following is a 568-amino-acid chain: Urease subunit alpha (568 aa).

The Urease domain occupies 131-568 (GGIDTHIHFI…LPMAQRYFLF (438 aa)). The Ni(2+) site is built by histidine 136, histidine 138, and lysine 219. Lysine 219 bears the N6-carboxylysine mark. Histidine 221 is a substrate binding site. Ni(2+) is bound by residues histidine 248 and histidine 274. Residue histidine 322 is the Proton donor of the active site. Aspartate 362 is a Ni(2+) binding site.

It belongs to the metallo-dependent hydrolases superfamily. Urease alpha subunit family. In terms of assembly, heterotrimer of UreA (gamma), UreB (beta) and UreC (alpha) subunits. Three heterotrimers associate to form the active enzyme. Ni cation serves as cofactor. In terms of processing, carboxylation allows a single lysine to coordinate two nickel ions.

The protein localises to the cytoplasm. The catalysed reaction is urea + 2 H2O + H(+) = hydrogencarbonate + 2 NH4(+). Its pathway is nitrogen metabolism; urea degradation; CO(2) and NH(3) from urea (urease route): step 1/1. The protein is Urease subunit alpha of Nostoc sp. (strain PCC 7120 / SAG 25.82 / UTEX 2576).